Here is a 454-residue protein sequence, read N- to C-terminus: uncharacterized protein (454 aa).

The region spanning 1–45 (MAAEGKAIAKVNDLVIFVPYVVPGDVVDLQIKRKKNKYAEAEAVK) is the TRAM domain. [4Fe-4S] cluster contacts are provided by cysteine 58, cysteine 64, cysteine 67, and cysteine 160. Positions 286, 315, 336, and 385 each coordinate S-adenosyl-L-methionine. Cysteine 412 functions as the Nucleophile in the catalytic mechanism.

The protein belongs to the class I-like SAM-binding methyltransferase superfamily. RNA M5U methyltransferase family.

This is an uncharacterized protein from Bacteroides thetaiotaomicron (strain ATCC 29148 / DSM 2079 / JCM 5827 / CCUG 10774 / NCTC 10582 / VPI-5482 / E50).